A 273-amino-acid chain; its full sequence is Signal recognition particle subunit SEC65 (273 aa).

The tract at residues 25-71 (PSLRTPIAPKITPKVVRSQDQENPAFLPGTNNNSNSNNNSSNEKEQL) is disordered. Positions 55–65 (NNNSNSNNNSS) are enriched in low complexity.

As to quaternary structure, fungal signal recognition particle (SRP) complex consists of a 7S RNA molecule (scR1) and at least six protein subunits: SRP72, SRP68, SRP54, SEC65, SRP21 and SRP14.

Its subcellular location is the cytoplasm. Its function is as follows. Signal-recognition-particle (SRP) assembly has a crucial role in targeting secretory proteins to the rough endoplasmic reticulum (ER) membrane. SRP is required for the cotranslational protein translocation for ER import and preferentially recognizes strongly hydrophobic signal sequences. It is involved in targeting the nascent chain-ribosome (RNC) complex to the ER and is proposed to participate in the arrest of nascent chain elongation during membrane targeting. SEC65 is required for SRP integrity. This Saccharomyces cerevisiae (strain ATCC 204508 / S288c) (Baker's yeast) protein is Signal recognition particle subunit SEC65 (SEC65).